The chain runs to 370 residues: MTDTLAAALGRIRPDVRAMHAYAVQPATGVLKMDAMENPFPLPPELQEALGRRLGALALNRYPGARLTDLKSALAAHIGMPEGFSMVLGNGSDEIITLLALACARPGTGERAAMLAPMPGFVMYPMSAQLQGLDFVAVPLTADFELDEPAMLAAIAQHRPAITYLAYPNNPTATLWDEGAVQRVIDAAGAQGGIVVMDEAYQPFASRTWLDRMRAEPVRNAHVLLMRTLSKFGLAGVRLGYLAGPAALVDEIEKVRPPYNVSVLNCEAALFALEHARVFAAQAAELRAVRTRLVAALRAMPGIERVWDSEANMVLVRVPDAARAFEGMKARKVLVKNVSTMHPLLARCLRLTVGSEADNAQMLDALQASL.

The residue at position 231 (K231) is an N6-(pyridoxal phosphate)lysine.

Belongs to the class-II pyridoxal-phosphate-dependent aminotransferase family. Histidinol-phosphate aminotransferase subfamily. Homodimer. Requires pyridoxal 5'-phosphate as cofactor.

The catalysed reaction is L-histidinol phosphate + 2-oxoglutarate = 3-(imidazol-4-yl)-2-oxopropyl phosphate + L-glutamate. It functions in the pathway amino-acid biosynthesis; L-histidine biosynthesis; L-histidine from 5-phospho-alpha-D-ribose 1-diphosphate: step 7/9. This chain is Histidinol-phosphate aminotransferase, found in Paracidovorax citrulli (strain AAC00-1) (Acidovorax citrulli).